A 333-amino-acid polypeptide reads, in one-letter code: Beta-ketoacyl-[acyl-carrier-protein] synthase III (333 aa).

Active-site residues include Cys116 and His258. The ACP-binding stretch occupies residues 259 to 263 (QANKR). The active site involves Asn288.

This sequence belongs to the thiolase-like superfamily. FabH family. As to quaternary structure, homodimer.

Its subcellular location is the cytoplasm. The enzyme catalyses malonyl-[ACP] + acetyl-CoA + H(+) = 3-oxobutanoyl-[ACP] + CO2 + CoA. The protein operates within lipid metabolism; fatty acid biosynthesis. Its function is as follows. Catalyzes the condensation reaction of fatty acid synthesis by the addition to an acyl acceptor of two carbons from malonyl-ACP. Catalyzes the first condensation reaction which initiates fatty acid synthesis and may therefore play a role in governing the total rate of fatty acid production. Possesses both acetoacetyl-ACP synthase and acetyl transacylase activities. Its substrate specificity determines the biosynthesis of branched-chain and/or straight-chain of fatty acids. The polypeptide is Beta-ketoacyl-[acyl-carrier-protein] synthase III (Koribacter versatilis (strain Ellin345)).